The following is a 437-amino-acid chain: Na(+)/H(+) antiporter NhaA (437 aa).

The next 11 helical transmembrane spans lie at 12-32, 65-85, 103-123, 133-153, 162-182, 186-206, 214-234, 308-328, 333-353, 377-397, and 412-432; these read SMNI…AVIA, LTMI…MVGL, ALPF…YSMV, GLAI…SLLG, IFLT…IAIF, HVAY…YFIG, IFFL…GIHS, GAVN…VMFS, VIGG…FLGI, ISGV…IANL, and LGVL…LHWV.

The protein belongs to the NhaA Na(+)/H(+) (TC 2.A.33) antiporter family.

The protein localises to the cell inner membrane. The enzyme catalyses Na(+)(in) + 2 H(+)(out) = Na(+)(out) + 2 H(+)(in). Functionally, na(+)/H(+) antiporter that extrudes sodium in exchange for external protons. This chain is Na(+)/H(+) antiporter NhaA, found in Bacteroides fragilis (strain ATCC 25285 / DSM 2151 / CCUG 4856 / JCM 11019 / LMG 10263 / NCTC 9343 / Onslow / VPI 2553 / EN-2).